We begin with the raw amino-acid sequence, 90 residues long: Probable Fe(2+)-trafficking protein (90 aa).

This sequence belongs to the Fe(2+)-trafficking protein family.

Could be a mediator in iron transactions between iron acquisition and iron-requiring processes, such as synthesis and/or repair of Fe-S clusters in biosynthetic enzymes. The sequence is that of Probable Fe(2+)-trafficking protein from Vibrio vulnificus (strain CMCP6).